Reading from the N-terminus, the 961-residue chain is MTPRRTPLSQLEQGIPFEQRHIGPDAEAQAKMLAQVGYGSLDELTAAAVPDVIKSAEALNLPSARTEAEVLAELRSLADRNQVLAPMIGLGYYGTFTPPVILRNVMENPAWYTAYTPYQPEISQGRLEALLNFQTMVAELTGLPTSGASLLDEGTAAAEAMALSRRVGKVKKGVFLVDADTLPQTVAVIETRAEPTGVEVVVADLSDGIPAEIAERGVFGVLLQYPGASGAVRAIEPVIEQAHELGAIVTVAADLLALTLLTSPGALGADIAVGTTQRFGVPMGFGGPHAGFMAVREKFARSLPGRLVGVSVDADGNKAYRLALQTREQHIRREKATSNICTAQVLLAVMAGMYAVYHGPDGLRTIARRTHRFAAILADGLRSAGVDVVHGAFFDTLTVRVPGKAAGIVAEARERGVNLRLVDADHVSIACDETTTRSQISAVWAAFGAEGDIEALDAAVADALPEGLLRSDDILTHPVFHQHRSETAMLRYLRKLADRDYALDRGMIPLGSCTMKLNATAEMESITWPEFGALHPFAPADQAQGFLTLIRELEERLAEVTGYDAVSIQPNAGSQGEFAGLLAVRAYHRANGDDQRTVCLIPSSAHGTNAASAVMAGMKVVVVKTADDGEVDIADLRAKIEQHRDELAVLMITYPSTHGVFEEHVAEICGEVHDAGGQVYVDGANLNALVGLAKPGKFGGDVSHLNLHKTFCIPHGGGGPGVGPVGVRAHLAPYLPNHPLQPAAGPETGVGPISAAPWGSAGILPISWAYVRLMGGEGLKRATQVAVLAANYIAKRLEPHFPILYNGPAGLVAHECIVDLRPISKATGVSIDDVAKRLIDYGFHSPTMSFPVAGTLMIEPTESEDLAELDRFCDTMIAIRAEIEKVASGEWSADDNPLSNAPHTAAALGGDWEHGYSREEAVFPAGVSAADKYWPPVRRIDGAFGDRNLVCSCPPLDAYDD.

Lys-709 carries the N6-(pyridoxal phosphate)lysine modification.

It belongs to the GcvP family. The glycine cleavage system is composed of four proteins: P, T, L and H. Pyridoxal 5'-phosphate serves as cofactor.

The catalysed reaction is N(6)-[(R)-lipoyl]-L-lysyl-[glycine-cleavage complex H protein] + glycine + H(+) = N(6)-[(R)-S(8)-aminomethyldihydrolipoyl]-L-lysyl-[glycine-cleavage complex H protein] + CO2. The glycine cleavage system catalyzes the degradation of glycine. The P protein binds the alpha-amino group of glycine through its pyridoxal phosphate cofactor; CO(2) is released and the remaining methylamine moiety is then transferred to the lipoamide cofactor of the H protein. The protein is Glycine dehydrogenase (decarboxylating) of Streptomyces griseus subsp. griseus (strain JCM 4626 / CBS 651.72 / NBRC 13350 / KCC S-0626 / ISP 5235).